We begin with the raw amino-acid sequence, 434 residues long: Alpha-enolase (434 aa).

Ser-2 is subject to N-acetylserine. The residue at position 5 (Lys-5) is an N6-acetyllysine. Ser-27 carries the phosphoserine modification. A Mg(2+)-binding site is contributed by Ser-40. At Tyr-44 the chain carries Phosphotyrosine. Lys-60 bears the N6-acetyllysine; alternate mark. Lys-60 carries the N6-succinyllysine; alternate modification. N6-acetyllysine occurs at positions 64 and 71. Position 89 is an N6-acetyllysine; alternate (Lys-89). N6-succinyllysine; alternate is present on Lys-89. Residues Lys-92 and Lys-126 each carry the N6-acetyllysine modification. His-158 and Glu-167 together coordinate substrate. N6-acetyllysine occurs at positions 193 and 199. Residue Lys-202 is modified to N6-acetyllysine; alternate. A Glycyl lysine isopeptide (Lys-Gly) (interchain with G-Cter in SUMO2); alternate cross-link involves residue Lys-202. The active-site Proton donor is the Glu-210. Lys-228 and Lys-233 each carry N6-acetyllysine; alternate. Lys-228 carries the post-translational modification N6-succinyllysine; alternate. N6-(2-hydroxyisobutyryl)lysine; alternate is present on Lys-228. Residue Lys-233 is modified to N6-malonyllysine; alternate. Asp-245 provides a ligand contact to Mg(2+). Ser-254 is subject to Phosphoserine. N6-acetyllysine is present on Lys-256. Phosphoserine is present on residues Ser-263 and Ser-272. Lys-281 carries the post-translational modification N6-acetyllysine; alternate. Residue Lys-281 is modified to N6-(2-hydroxyisobutyryl)lysine; alternate. An N6-acetyllysine modification is found at Lys-285. Tyr-287 is subject to Phosphotyrosine. Ser-291 bears the Phosphoserine mark. Glu-293 and Asp-318 together coordinate Mg(2+). The substrate site is built by Glu-293 and Asp-318. Residues Lys-335 and Lys-343 each carry the N6-acetyllysine modification. Lys-343 acts as the Proton acceptor in catalysis. Substrate-binding positions include 370–373 (SHRS) and Lys-394. Positions 405 to 434 (AKYNQLLRIEEELGSKAKFAGRNFRNPLAK) are required for interaction with PLG. Lys-406 is subject to N6-acetyllysine. Residue Lys-420 is modified to N6-acetyllysine; alternate. An N6-succinyllysine; alternate modification is found at Lys-420. Lys-420 bears the N6-malonyllysine; alternate mark.

Belongs to the enolase family. As to quaternary structure, mammalian enolase is composed of 3 isozyme subunits, alpha, beta and gamma, which can form homodimers or heterodimers which are cell-type and development-specific. ENO1 interacts with PLG in the neuronal plasma membrane and promotes its activation. The C-terminal lysine is required for this binding. Interacts with ENO4 and PGAM2. Interacts with CMTM6. Requires Mg(2+) as cofactor. In terms of processing, ISGylated. Post-translationally, lysine 2-hydroxyisobutyrylation (Khib) by p300/EP300 activates the phosphopyruvate hydratase activity.

The protein localises to the cytoplasm. Its subcellular location is the cell membrane. It catalyses the reaction (2R)-2-phosphoglycerate = phosphoenolpyruvate + H2O. Its pathway is carbohydrate degradation; glycolysis; pyruvate from D-glyceraldehyde 3-phosphate: step 4/5. In terms of biological role, glycolytic enzyme the catalyzes the conversion of 2-phosphoglycerate to phosphoenolpyruvate. In addition to glycolysis, involved in various processes such as growth control, hypoxia tolerance and allergic responses. May also function in the intravascular and pericellular fibrinolytic system due to its ability to serve as a receptor and activator of plasminogen on the cell surface of several cell-types such as leukocytes and neurons. Stimulates immunoglobulin production. This is Alpha-enolase (ENO1) from Pongo abelii (Sumatran orangutan).